The chain runs to 1036 residues: Isoleucine--tRNA ligase (1036 aa).

The 'HIGH' region signature appears at 46–56; it reads PFATGLPHYGH. Residues 589–593 carry the 'KMSKS' region motif; the sequence is KMSKR. Lys-592 lines the ATP pocket.

The protein belongs to the class-I aminoacyl-tRNA synthetase family. IleS type 2 subfamily. In terms of assembly, monomer. Zn(2+) is required as a cofactor.

It localises to the cytoplasm. It carries out the reaction tRNA(Ile) + L-isoleucine + ATP = L-isoleucyl-tRNA(Ile) + AMP + diphosphate. Functionally, catalyzes the attachment of isoleucine to tRNA(Ile). As IleRS can inadvertently accommodate and process structurally similar amino acids such as valine, to avoid such errors it has two additional distinct tRNA(Ile)-dependent editing activities. One activity is designated as 'pretransfer' editing and involves the hydrolysis of activated Val-AMP. The other activity is designated 'posttransfer' editing and involves deacylation of mischarged Val-tRNA(Ile). The chain is Isoleucine--tRNA ligase from Chlamydia trachomatis serovar L2b (strain UCH-1/proctitis).